A 340-amino-acid polypeptide reads, in one-letter code: Ketol-acid reductoisomerase (NADP(+)) (340 aa).

In terms of domain architecture, KARI N-terminal Rossmann spans 3–183; that stretch reads LPIYYDKDCD…GGGRTGIIHT (181 aa). Residues 26 to 29, Ser-54, and 84 to 87 contribute to the NADP(+) site; these read FGSQ and DEIQ. His-109 is an active-site residue. Residue Gly-135 participates in NADP(+) binding. Positions 184–329 constitute a KARI C-terminal knotted domain; it reads TFKDETETDL…KRLRAMMPWI (146 aa). Mg(2+) contacts are provided by Asp-192, Glu-196, Glu-228, and Glu-232. Substrate is bound at residue Ser-253.

It belongs to the ketol-acid reductoisomerase family. Mg(2+) serves as cofactor.

It carries out the reaction (2R)-2,3-dihydroxy-3-methylbutanoate + NADP(+) = (2S)-2-acetolactate + NADPH + H(+). It catalyses the reaction (2R,3R)-2,3-dihydroxy-3-methylpentanoate + NADP(+) = (S)-2-ethyl-2-hydroxy-3-oxobutanoate + NADPH + H(+). It participates in amino-acid biosynthesis; L-isoleucine biosynthesis; L-isoleucine from 2-oxobutanoate: step 2/4. It functions in the pathway amino-acid biosynthesis; L-valine biosynthesis; L-valine from pyruvate: step 2/4. Involved in the biosynthesis of branched-chain amino acids (BCAA). Catalyzes an alkyl-migration followed by a ketol-acid reduction of (S)-2-acetolactate (S2AL) to yield (R)-2,3-dihydroxy-isovalerate. In the isomerase reaction, S2AL is rearranged via a Mg-dependent methyl migration to produce 3-hydroxy-3-methyl-2-ketobutyrate (HMKB). In the reductase reaction, this 2-ketoacid undergoes a metal-dependent reduction by NADPH to yield (R)-2,3-dihydroxy-isovalerate. This is Ketol-acid reductoisomerase (NADP(+)) from Nitratiruptor sp. (strain SB155-2).